Here is a 412-residue protein sequence, read N- to C-terminus: Putative pectate lyase 11 (412 aa).

A signal peptide spans Met-1–Ala-24. Residues Asp-210, Asp-234, and Asp-238 each contribute to the Ca(2+) site. Residue Arg-290 is part of the active site.

Belongs to the polysaccharide lyase 1 family. Ca(2+) is required as a cofactor.

The enzyme catalyses Eliminative cleavage of (1-&gt;4)-alpha-D-galacturonan to give oligosaccharides with 4-deoxy-alpha-D-galact-4-enuronosyl groups at their non-reducing ends.. It participates in glycan metabolism; pectin degradation; 2-dehydro-3-deoxy-D-gluconate from pectin: step 2/5. This is Putative pectate lyase 11 from Arabidopsis thaliana (Mouse-ear cress).